Consider the following 461-residue polypeptide: PTS system sucrose-specific EIIBC component (461 aa).

A PTS EIIB type-1 domain is found at Lys-4–Glu-87. Cys-26 acts as the Phosphocysteine intermediate; for EIIB activity in catalysis. A PTS EIIC type-1 domain is found at Lys-107–Lys-461. 10 helical membrane passes run Ile-112 to Met-132, Leu-148 to Ala-168, Leu-178 to Ala-198, Phe-208 to Val-228, Leu-248 to Gly-268, Ala-289 to Val-309, Leu-329 to Phe-349, Ile-359 to Val-379, Phe-387 to Ala-407, and Leu-430 to Val-450.

It is found in the cell membrane. It carries out the reaction N(pros)-phospho-L-histidyl-[protein](out) + sucrose = sucrose 6(G)-phosphate(in) + L-histidyl-[protein]. The phosphoenolpyruvate-dependent sugar phosphotransferase system (sugar PTS), a major carbohydrate active transport system, catalyzes the phosphorylation of incoming sugar substrates concomitantly with their translocation across the cell membrane. This system is involved in sucrose transport. The chain is PTS system sucrose-specific EIIBC component (sacP) from Bacillus subtilis (strain 168).